Here is a 188-residue protein sequence, read N- to C-terminus: dCTP deaminase (188 aa).

DCTP is bound by residues 111-116, 135-137, glutamine 156, tyrosine 170, and glutamine 180; these read KSTYAR and TLE. Glutamate 137 acts as the Proton donor/acceptor in catalysis.

This sequence belongs to the dCTP deaminase family. In terms of assembly, homotrimer.

It catalyses the reaction dCTP + H2O + H(+) = dUTP + NH4(+). It participates in pyrimidine metabolism; dUMP biosynthesis; dUMP from dCTP (dUTP route): step 1/2. Catalyzes the deamination of dCTP to dUTP. This Acidithiobacillus ferrooxidans (strain ATCC 23270 / DSM 14882 / CIP 104768 / NCIMB 8455) (Ferrobacillus ferrooxidans (strain ATCC 23270)) protein is dCTP deaminase.